Here is a 62-residue protein sequence, read N- to C-terminus: Calmodulin regulator protein PCP4 (62 aa).

The disordered stretch occupies residues 1–39 (MSERQGAGATNGKDKTSGENDGQKKVQEEFDIDMDAPET). A compositionally biased stretch (basic and acidic residues) spans 12 to 28 (GKDKTSGENDGQKKVQE). Residues 28–40 (EEFDIDMDAPETE) form an acidic; binds calcium and is required for modulating the calcium-binding kinetics of calmodulin region. One can recognise an IQ domain in the interval 39–62 (TERAAVAIQSQFRKFQKKKAGSQS).

This sequence belongs to the PCP4 family. As to quaternary structure, binds to both calcium-free and calcium-bound calmodulin. The affinity for the calcium-bound form is 50-fold greater.

In terms of biological role, functions as a modulator of calcium-binding by calmodulin. Thereby, regulates calmodulin activity and the different processes it controls. For instance, may play a role in neuronal differentiation through activation of calmodulin-dependent kinase signaling pathways. The protein is Calmodulin regulator protein PCP4 of Homo sapiens (Human).